The chain runs to 590 residues: Fucose-1-phosphate guanylyltransferase (590 aa).

Expressed at highest levels in brain, moderately in testis, ovary and kidney, and weakly in liver, spleen, heart and lung.

Its subcellular location is the cytoplasm. The enzyme catalyses beta-L-fucose 1-phosphate + GTP + H(+) = GDP-beta-L-fucose + diphosphate. Catalyzes the formation of GDP-L-fucose from GTP and L-fucose-1-phosphate. Functions as a salvage pathway to reutilize L-fucose arising from the turnover of glycoproteins and glycolipids. The sequence is that of Fucose-1-phosphate guanylyltransferase from Mus musculus (Mouse).